The following is a 542-amino-acid chain: Chaperonin GroEL (542 aa).

Residues 29–32 (TLGP), 86–90 (DGTTT), Gly-413, 477–479 (NAA), and Asp-493 contribute to the ATP site.

It belongs to the chaperonin (HSP60) family. As to quaternary structure, forms a cylinder of 14 subunits composed of two heptameric rings stacked back-to-back. Interacts with the co-chaperonin GroES.

Its subcellular location is the cytoplasm. The enzyme catalyses ATP + H2O + a folded polypeptide = ADP + phosphate + an unfolded polypeptide.. Together with its co-chaperonin GroES, plays an essential role in assisting protein folding. The GroEL-GroES system forms a nano-cage that allows encapsulation of the non-native substrate proteins and provides a physical environment optimized to promote and accelerate protein folding. The sequence is that of Chaperonin GroEL from Beutenbergia cavernae (strain ATCC BAA-8 / DSM 12333 / CCUG 43141 / JCM 11478 / NBRC 16432 / NCIMB 13614 / HKI 0122).